The following is an 82-amino-acid chain: RNA-binding protein Hfq (82 aa).

The 60-residue stretch at 10–69 (DPFLNALRREHVPVSIYLVNGIKLQGQIESFDQYVVLLRNTVTQMVYKHAISTIVPGRAV) folds into the Sm domain.

It belongs to the Hfq family. As to quaternary structure, homohexamer.

RNA chaperone that binds small regulatory RNA (sRNAs) and mRNAs to facilitate mRNA translational regulation in response to envelope stress, environmental stress and changes in metabolite concentrations. Also binds with high specificity to tRNAs. This is RNA-binding protein Hfq from Albidiferax ferrireducens (strain ATCC BAA-621 / DSM 15236 / T118) (Rhodoferax ferrireducens).